Reading from the N-terminus, the 393-residue chain is G protein-activated inward rectifier potassium channel 3 (393 aa).

The disordered stretch occupies residues 1–23 (MAQENAAFSPGQEEPPRRRGRQR). Topologically, residues 1–57 (MAQENAAFSPGQEEPPRRRGRQRYVEKDGRCNVQQGNVRETYRYLTDLFTTLVDLQW) are cytoplasmic. The helical transmembrane segment at 58–82 (RLSLLFFVLAYALTWLFFGAIWWLI) threads the bilayer. Residues 83 to 106 (AYGRGDLEHLEDTAWTPCVNNLNG) are Extracellular-facing. Residues 107–118 (FVAAFLFSIETE) constitute an intramembrane region (helical; Pore-forming). An intramembrane region (pore-forming) is located at residues 119–125 (TTIGYGH). The Selectivity filter signature appears at 120-125 (TIGYGH). Over 126-134 (RVITDQCPE) the chain is Extracellular. Residues 135-156 (GIVLLLLQAILGSMVNAFMVGC) form a helical membrane-spanning segment. Topologically, residues 157-393 (MFVKISQPNK…LPPPESESKV (237 aa)) are cytoplasmic. A disordered region spans residues 360 to 393 (KVEEEGAGEGAGGEAGADKEQNGCLPPPESESKV). Positions 384–393 (LPPPESESKV) are enriched in pro residues. The PDZ-binding signature appears at 390–393 (ESKV).

Belongs to the inward rectifier-type potassium channel (TC 1.A.2.1) family. KCNJ9 subfamily. As to quaternary structure, associates with KCNJ3/GIRK1 to form a G-protein-activated heteromultimer pore-forming unit. Interacts (via PDZ-binding motif) with SNX27 (via PDZ domain); the interaction is required when endocytosed to prevent degradation in lysosomes and promote recycling to the plasma membrane.

The protein resides in the membrane. It carries out the reaction K(+)(in) = K(+)(out). Functionally, inward rectifier potassium channels are characterized by a greater tendency to allow potassium to flow into the cell rather than out of it. Their voltage dependence is regulated by the concentration of extracellular potassium; as external potassium is raised, the voltage range of the channel opening shifts to more positive voltages. The inward rectification is mainly due to the blockage of outward current by internal magnesium, This receptor is controlled by G proteins. Unable to produce channel activity when expressed alone. Forms a functional channel in association with KCNJ3/GIRK1. This Homo sapiens (Human) protein is G protein-activated inward rectifier potassium channel 3 (KCNJ9).